The chain runs to 380 residues: Chaperone protein DnaJ (380 aa).

The region spanning 5-70 (DYYEVLGVSK…QKRQTYDQYG (66 aa)) is the J domain. The segment at 136–214 (GKEVEIKIPT…CHGQGRVEKT (79 aa)) adopts a CR-type zinc-finger fold. 8 residues coordinate Zn(2+): Cys-149, Cys-152, Cys-166, Cys-169, Cys-188, Cys-191, Cys-202, and Cys-205. CXXCXGXG motif repeat units follow at residues 149 to 156 (CDPCDGSG), 166 to 173 (CTTCHGAG), 188 to 195 (CPTCQGQG), and 202 to 209 (CDSCHGQG).

Belongs to the DnaJ family. Homodimer. Zn(2+) is required as a cofactor.

The protein resides in the cytoplasm. Its function is as follows. Participates actively in the response to hyperosmotic and heat shock by preventing the aggregation of stress-denatured proteins and by disaggregating proteins, also in an autonomous, DnaK-independent fashion. Unfolded proteins bind initially to DnaJ; upon interaction with the DnaJ-bound protein, DnaK hydrolyzes its bound ATP, resulting in the formation of a stable complex. GrpE releases ADP from DnaK; ATP binding to DnaK triggers the release of the substrate protein, thus completing the reaction cycle. Several rounds of ATP-dependent interactions between DnaJ, DnaK and GrpE are required for fully efficient folding. Also involved, together with DnaK and GrpE, in the DNA replication of plasmids through activation of initiation proteins. The protein is Chaperone protein DnaJ of Pseudoalteromonas translucida (strain TAC 125).